A 660-amino-acid polypeptide reads, in one-letter code: DNA mismatch repair protein MutL (660 aa).

The tract at residues 408 to 436 (DQTSASASVKHASRSQDENQLSEHPNLDF) is disordered. The segment covering 425-436 (ENQLSEHPNLDF) has biased composition (polar residues).

This sequence belongs to the DNA mismatch repair MutL/HexB family.

In terms of biological role, this protein is involved in the repair of mismatches in DNA. It is required for dam-dependent methyl-directed DNA mismatch repair. May act as a 'molecular matchmaker', a protein that promotes the formation of a stable complex between two or more DNA-binding proteins in an ATP-dependent manner without itself being part of a final effector complex. This is DNA mismatch repair protein MutL from Streptococcus uberis (strain ATCC BAA-854 / 0140J).